The following is a 131-amino-acid chain: Large ribosomal subunit protein bL17 (131 aa).

This sequence belongs to the bacterial ribosomal protein bL17 family. As to quaternary structure, part of the 50S ribosomal subunit. Contacts protein L32.

In Methylibium petroleiphilum (strain ATCC BAA-1232 / LMG 22953 / PM1), this protein is Large ribosomal subunit protein bL17.